The sequence spans 999 residues: Bifunctional glutamine synthetase adenylyltransferase/adenylyl-removing enzyme (999 aa).

Residues 1 to 493 (MFVRKPATER…LHAKLFYQPL (493 aa)) are adenylyl removase. The interval 498-999 (GHTALGIGEG…KAVVRKIFGG (502 aa)) is adenylyl transferase.

Belongs to the GlnE family. Mg(2+) serves as cofactor.

It carries out the reaction [glutamine synthetase]-O(4)-(5'-adenylyl)-L-tyrosine + phosphate = [glutamine synthetase]-L-tyrosine + ADP. The catalysed reaction is [glutamine synthetase]-L-tyrosine + ATP = [glutamine synthetase]-O(4)-(5'-adenylyl)-L-tyrosine + diphosphate. Its function is as follows. Involved in the regulation of glutamine synthetase GlnA, a key enzyme in the process to assimilate ammonia. When cellular nitrogen levels are high, the C-terminal adenylyl transferase (AT) inactivates GlnA by covalent transfer of an adenylyl group from ATP to specific tyrosine residue of GlnA, thus reducing its activity. Conversely, when nitrogen levels are low, the N-terminal adenylyl removase (AR) activates GlnA by removing the adenylyl group by phosphorolysis, increasing its activity. The regulatory region of GlnE binds the signal transduction protein PII (GlnB) which indicates the nitrogen status of the cell. The chain is Bifunctional glutamine synthetase adenylyltransferase/adenylyl-removing enzyme from Mycolicibacterium smegmatis (strain ATCC 700084 / mc(2)155) (Mycobacterium smegmatis).